We begin with the raw amino-acid sequence, 326 residues long: Adenosine receptor A1 (326 aa).

Topologically, residues 1–10 (MPPYISAFQA) are extracellular. Residues 11 to 33 (AYIGIEVLIALVSVPGNVLVIWA) traverse the membrane as a helical segment. At 34–46 (VKVNQALRDATFC) the chain is on the cytoplasmic side. The chain crosses the membrane as a helical span at residues 47 to 69 (FIVSLAVADVAVGALVIPLAILI). At 70-80 (NIGPQTYFHTC) the chain is on the extracellular side. A disulfide bridge connects residues cysteine 80 and cysteine 169. The chain crosses the membrane as a helical span at residues 81-102 (LMVACPVLILTQSSILALLAIA). At 103–123 (VDRYLRVKIPLRYKTVVTQRR) the chain is on the cytoplasmic side. A helical transmembrane segment spans residues 124-146 (AAVAIAGCWILSLVVGLTPMFGW). The Extracellular portion of the chain corresponds to 147 to 176 (NNLSVVEQDWRANGSVGEPVIKCEFEKVIS). Asparagine 148 and asparagine 159 each carry an N-linked (GlcNAc...) asparagine glycan. Residues 177–201 (MEYMVYFNFFVWVLPPLLLMVLIYL) form a helical membrane-spanning segment. Over 202–235 (EVFYLIRKQLNKKVSASSGDPQKYYGKELKIAKS) the chain is Cytoplasmic. The chain crosses the membrane as a helical span at residues 236 to 259 (LALILFLFALSWLPLHILNCITLF). Topologically, residues 260-267 (CPTCQKPS) are extracellular. The chain crosses the membrane as a helical span at residues 268–292 (ILIYIAIFLTHGNSAMNPIVYAFRI). Topologically, residues 293–326 (HKFRVTFLKIWNDHFRCQPKPPIDEDLPEEKAED) are cytoplasmic. Residue cysteine 309 is the site of S-palmitoyl cysteine attachment.

The protein belongs to the G-protein coupled receptor 1 family. In terms of tissue distribution, widely expressed in brain and spinal cord.

It is found in the cell membrane. In terms of biological role, receptor for adenosine. The activity of this receptor is mediated by G proteins which inhibit adenylyl cyclase. This Rattus norvegicus (Rat) protein is Adenosine receptor A1 (Adora1).